A 435-amino-acid chain; its full sequence is 3-phosphoshikimate 1-carboxyvinyltransferase (435 aa).

3-phosphoshikimate-binding residues include lysine 28, serine 29, and arginine 33. Residue lysine 28 coordinates phosphoenolpyruvate. Positions 100 and 128 each coordinate phosphoenolpyruvate. Serine 173, glutamine 175, aspartate 321, and lysine 348 together coordinate 3-phosphoshikimate. Glutamine 175 lines the phosphoenolpyruvate pocket. Residue aspartate 321 is the Proton acceptor of the active site. Positions 352 and 394 each coordinate phosphoenolpyruvate.

It belongs to the EPSP synthase family. In terms of assembly, monomer.

The protein localises to the cytoplasm. The catalysed reaction is 3-phosphoshikimate + phosphoenolpyruvate = 5-O-(1-carboxyvinyl)-3-phosphoshikimate + phosphate. It functions in the pathway metabolic intermediate biosynthesis; chorismate biosynthesis; chorismate from D-erythrose 4-phosphate and phosphoenolpyruvate: step 6/7. Functionally, catalyzes the transfer of the enolpyruvyl moiety of phosphoenolpyruvate (PEP) to the 5-hydroxyl of shikimate-3-phosphate (S3P) to produce enolpyruvyl shikimate-3-phosphate and inorganic phosphate. The protein is 3-phosphoshikimate 1-carboxyvinyltransferase of Desulfitobacterium hafniense (strain DSM 10664 / DCB-2).